A 185-amino-acid polypeptide reads, in one-letter code: MFSLGVQSRLFTRRALFSGFRFNSTTTTTTTASQPRLTWVDYFQLKKQNNRINTIAGVFTGLGGAFITLSYLGNIEIDVEKPIMGFDPLMVMGGAVILGGLVGFLVGPFIGSSIFRLTNRAQLKQFELKNTEFLSRLRIKRPDPSSQSFSNPIPDYYGEKIYSLKDYKQWLRDCNAFRRKSKEFL.

The N-terminal 52 residues, 1–52 (MFSLGVQSRLFTRRALFSGFRFNSTTTTTTTASQPRLTWVDYFQLKKQNNRI), are a transit peptide targeting the mitochondrion. A run of 2 helical transmembrane segments spans residues 55–75 (IAGV…LGNI) and 90–110 (MVMG…GPFI).

It belongs to the PAM17 family. As to quaternary structure, component of the PAM complex, at least composed of mtHsp70 (SSC1), MGE1, TIM44, PAM16, PAM17 and PAM18.

Its subcellular location is the mitochondrion inner membrane. Component of the PAM complex, a complex required for the translocation of transit peptide-containing proteins from the inner membrane into the mitochondrial matrix in an ATP-dependent manner. The polypeptide is Presequence translocated-associated motor subunit PAM17, mitochondrial (PAM17) (Candida albicans (strain SC5314 / ATCC MYA-2876) (Yeast)).